A 77-amino-acid chain; its full sequence is uncharacterized protein (77 aa).

A helical transmembrane segment spans residues 36–52 (FYQLILKVLSALLLLSV).

The protein resides in the membrane. This is an uncharacterized protein from Saccharomyces cerevisiae (strain ATCC 204508 / S288c) (Baker's yeast).